A 461-amino-acid polypeptide reads, in one-letter code: Nuclear distribution protein PAC1 (461 aa).

The LisH domain maps to 9 to 41 (QAEELHKSIIAYLTANNLLNTANTLRAELNLSE). WD repeat units follow at residues 114–155 (SHRD…RTIK), 157–197 (HTRA…KNIR), 201–248 (GHDH…CVRT), 251–290 (GHTA…PESK), 312–355 (QYLS…LMTL), 357–396 (GHDN…KCIK), and 401–457 (AHER…MKLR).

The protein belongs to the WD repeat LIS1/nudF family. In terms of assembly, self-associates. Interacts with NDL1 and dynein.

The protein localises to the cytoplasm. It localises to the cytoskeleton. The protein resides in the spindle pole. Positively regulates the activity of the minus-end directed microtubule motor protein dynein. May enhance dynein-mediated microtubule sliding by targeting dynein to the microtubule plus end. Required for nuclear migration during vegetative growth as well as development. Required for retrograde early endosome (EE) transport from the hyphal tip. Required for localization of dynein to the mitotic spindle poles. Recruits additional proteins to the dynein complex at SPBs. The protein is Nuclear distribution protein PAC1 of Arthroderma otae (strain ATCC MYA-4605 / CBS 113480) (Microsporum canis).